Consider the following 185-residue polypeptide: Large ribosomal subunit protein uL6 (185 aa).

This sequence belongs to the universal ribosomal protein uL6 family. As to quaternary structure, part of the 50S ribosomal subunit.

Functionally, this protein binds to the 23S rRNA, and is important in its secondary structure. It is located near the subunit interface in the base of the L7/L12 stalk, and near the tRNA binding site of the peptidyltransferase center. This Staphylothermus marinus (strain ATCC 43588 / DSM 3639 / JCM 9404 / F1) protein is Large ribosomal subunit protein uL6.